The chain runs to 388 residues: Dual-specificity RNA methyltransferase RlmN (388 aa).

Catalysis depends on glutamate 109, which acts as the Proton acceptor. Residues 115 to 354 (EEDRATLCVS…TIVRKTRGDD (240 aa)) form the Radical SAM core domain. Cysteine 122 and cysteine 359 form a disulfide bridge. 3 residues coordinate [4Fe-4S] cluster: cysteine 129, cysteine 133, and cysteine 136. S-adenosyl-L-methionine contacts are provided by residues 183-184 (GE), serine 215, 237-239 (SLH), and asparagine 316. Cysteine 359 serves as the catalytic S-methylcysteine intermediate.

This sequence belongs to the radical SAM superfamily. RlmN family. The cofactor is [4Fe-4S] cluster.

The protein localises to the cytoplasm. It catalyses the reaction adenosine(2503) in 23S rRNA + 2 reduced [2Fe-2S]-[ferredoxin] + 2 S-adenosyl-L-methionine = 2-methyladenosine(2503) in 23S rRNA + 5'-deoxyadenosine + L-methionine + 2 oxidized [2Fe-2S]-[ferredoxin] + S-adenosyl-L-homocysteine. The enzyme catalyses adenosine(37) in tRNA + 2 reduced [2Fe-2S]-[ferredoxin] + 2 S-adenosyl-L-methionine = 2-methyladenosine(37) in tRNA + 5'-deoxyadenosine + L-methionine + 2 oxidized [2Fe-2S]-[ferredoxin] + S-adenosyl-L-homocysteine. Its function is as follows. Specifically methylates position 2 of adenine 2503 in 23S rRNA and position 2 of adenine 37 in tRNAs. m2A2503 modification seems to play a crucial role in the proofreading step occurring at the peptidyl transferase center and thus would serve to optimize ribosomal fidelity. In Enterobacter sp. (strain 638), this protein is Dual-specificity RNA methyltransferase RlmN.